The sequence spans 502 residues: tRNA-2-methylthio-N(6)-dimethylallyladenosine synthase (502 aa).

The 118-residue stretch at 12–129 (RTYQVRTYGC…LPVLLERARH (118 aa)) folds into the MTTase N-terminal domain. The [4Fe-4S] cluster site is built by Cys21, Cys58, Cys92, Cys166, Cys170, and Cys173. Positions 152-383 (RESTYAGWVS…ACVEEITWAE (232 aa)) constitute a Radical SAM core domain. Residues 385-455 (RRLVGETVEV…PHHLNADGEP (71 aa)) enclose the TRAM domain. The disordered stretch occupies residues 451-502 (ADGEPLAHRRTPAGDAAEAGRRPRTAGVSLGLPTVGAPPSPVPPAASSACAC).

Belongs to the methylthiotransferase family. MiaB subfamily. As to quaternary structure, monomer. It depends on [4Fe-4S] cluster as a cofactor.

The protein resides in the cytoplasm. The enzyme catalyses N(6)-dimethylallyladenosine(37) in tRNA + (sulfur carrier)-SH + AH2 + 2 S-adenosyl-L-methionine = 2-methylsulfanyl-N(6)-dimethylallyladenosine(37) in tRNA + (sulfur carrier)-H + 5'-deoxyadenosine + L-methionine + A + S-adenosyl-L-homocysteine + 2 H(+). Its function is as follows. Catalyzes the methylthiolation of N6-(dimethylallyl)adenosine (i(6)A), leading to the formation of 2-methylthio-N6-(dimethylallyl)adenosine (ms(2)i(6)A) at position 37 in tRNAs that read codons beginning with uridine. This is tRNA-2-methylthio-N(6)-dimethylallyladenosine synthase from Salinispora arenicola (strain CNS-205).